Reading from the N-terminus, the 437-residue chain is Elongation factor 1-gamma (437 aa).

An N-acetylalanine modification is found at A2. The 86-residue stretch at 2–87 (AAGTLYTYPE…YVSNEELRGS (86 aa)) folds into the GST N-terminal domain. A GST C-terminal domain is found at 88-216 (TPEAAAQVVQ…VKLCEKMAQF (129 aa)). Residues K147 and K212 each carry the N6-acetyllysine modification. The segment covering 221–254 (FAESQPKKDTPRKEKGSREEKQKPQAERKEEKKA) has biased composition (basic and acidic residues). Residues 221 to 268 (FAESQPKKDTPRKEKGSREEKQKPQAERKEEKKAAAPAPEEEMDECEQ) are disordered. K253 participates in a covalent cross-link: Glycyl lysine isopeptide (Lys-Gly) (interchain with G-Cter in SUMO1). Positions 276–437 (AKDPFAHLPK…KAVNQGKIFK (162 aa)) constitute an EF-1-gamma C-terminal domain. A Glycyl lysine isopeptide (Lys-Gly) (interchain with G-Cter in SUMO2) cross-link involves residue K285. An N6-acetyllysine modification is found at K401. Position 434 is an N6-acetyllysine; alternate (K434). K434 carries the N6-malonyllysine; alternate modification.

As to quaternary structure, EF-1 is composed of four subunits: alpha, beta, delta, and gamma.

Functionally, probably plays a role in anchoring the complex to other cellular components. This is Elongation factor 1-gamma (Eef1g) from Mus musculus (Mouse).